The sequence spans 561 residues: Acyl-CoA ligase frbB (561 aa).

Residues 213–221, 354–359, aspartate 437, arginine 456, and lysine 551 contribute to the ATP site; these read TSGTSGAQK and PGWGLT. The tract at residues 284 to 354 is SBD1; it reads DLKRVLGSIA…TLRPKWHLQP (71 aa). The interval 355–417 is SBD2; it reads GWGLTEGGGA…MKSPSVIAGY (63 aa).

The protein belongs to the ATP-dependent AMP-binding enzyme family.

It participates in antifungal biosynthesis. Its function is as follows. Acyl-CoA ligase; part of the gene cluster that mediates the biosynthesis of the antifungal antibiotic FR901469, an inhibitor of beta-1,3-glucansynthase, exerting antifungal activity against the pathogenes Candida albicans and Aspergillus fumigatus. FR901469 is a cyclic depsipeptide containing 12 amino acid residues and a fatty acid chain. The NRPS frbI contains 12 modules responsible for the formation of the depsipeptide backbone which is denoted as Acyl-Thr-Ala-Tyr-Val-4OHPro-Thr-Thr-3OHPro-threo3OHGln-Gly-Thr-Orn-OH (C71H116N14O23). The PKS frbB is probably involved in the production of the hydrocarbon chain, and the acyl-CoA ligase frbC might be involved in the transport of the chain to the peptide ptoduct of frbI. Because FR901469 contains 3 hydroxylated amino acid residues, the 3 oxygenases frbA, frbH, and frbJ might be participating in amino acid hydroxylation. As no thioesterase domains were detected in frbI or frbB, the thioesterases frbD and frbE may instead release and cyclize the products of the NRPS and PKS, respectively. The chain is Acyl-CoA ligase frbB from Dothideomycetidae sp. (strain 11243) (Fungal sp. (strain No.11243)).